A 156-amino-acid polypeptide reads, in one-letter code: Ribosomally synthesized cyclic peptide victorin precursosr vicA1 (156 aa).

A signal peptide spans 1-21 (MVRITALMSGSILLFALQALA). 7 consecutive propeptides follow at residues 22–36 (MPVETTSVEPAAEKR), 43–55 (KRGEEVEPAEEKR), 62–74 (KRGEEVEPAEEKR), 81–93 (KRGEEVEPAEEKR), 100–112 (KRGEEVEPAEEKR), 119–131 (KRGEEVEPAEEKR), and 138–150 (KRGEEVEPAEEKR).

Post-translationally, vicA1 is processed by several endopeptidases including kexin proteases as well as the cluster-specific peptidases vicP1 and vicP2 to produce 7 identical copies of the hexapeptide Gly-Leu-Lys-Leu-Ala-Phe, that are further modified to yield victorins. After being excised from the precursor peptide, the core peptides are cyclized and modified post-translationally by enzymes encoded within the gene cluster. The ustYa family protein vicYb is required for the formation of the macrocycle in victorin and the copper amine oxidases (CAOs) vicK1 and vicK2 are responsible for converting victorin to the active form by oxidizing the N-terminal glycyl residue in the peptides to glyoxylate. Relaxed substrate specificity of enzymes in the victorin biosynthetic pathway results in a metabolic grid that produces a set of analogs including victorinines B, C, E or HV-toxin M.

Its pathway is mycotoxin biosynthesis. Functionally, ribosomally synthesized cyclic peptide victorin precursor, part of the gene cluster that mediates the biosynthesis of the secondary metabolite victorin, the molecular basis for Victoria blight of oats. The vicA1 translated product contains a 7-fold repeated peptide embedding the hexapeptide Gly-Leu-Lys-Leu-Ala-Phe, that is converted into the cyclic victorin. The chain is Ribosomally synthesized cyclic peptide victorin precursosr vicA1 from Bipolaris victoriae (strain FI3) (Victoria blight of oats agent).